We begin with the raw amino-acid sequence, 268 residues long: Chymotrypsin-C (268 aa).

The N-terminal stretch at 1-16 (MLGITVFTTFLAYASS) is a signal peptide. The propeptide at 17-29 (CGAPIFQPNLSAR) is activation peptide. Disulfide bonds link Cys-17–Cys-141, Cys-59–Cys-75, Cys-155–Cys-222, Cys-186–Cys-202, and Cys-212–Cys-243. N-linked (GlcNAc...) asparagine glycosylation is present at Asn-25. The 239-residue stretch at 30–268 (VVGGEDAIPH…IDWINQKLQL (239 aa)) folds into the Peptidase S1 domain. Catalysis depends on charge relay system residues His-74 and Asp-121. Ser-216 (charge relay system) is an active-site residue.

The protein belongs to the peptidase S1 family. Elastase subfamily. As to quaternary structure, monomer. The zymogen is secreted as a ternary complex composed of procarboxypeptidase A, chymotrypsinogen C and proproteinase E. In terms of tissue distribution, pancreas.

Its subcellular location is the secreted. It localises to the extracellular space. The catalysed reaction is Preferential cleavage: Leu-|-Xaa, Tyr-|-Xaa, Phe-|-Xaa, Met-|-Xaa, Trp-|-Xaa, Gln-|-Xaa, Asn-|-Xaa.. In terms of biological role, regulates activation and degradation of trypsinogens and procarboxypeptidases by targeting specific cleavage sites within their zymogen precursors. Has chymotrypsin-type protease activity and hypocalcemic activity. This is Chymotrypsin-C (CTRC) from Bos taurus (Bovine).